The primary structure comprises 122 residues: uncharacterized protein (122 aa).

4 helical membrane passes run 7 to 27 (IVAI…IFCD), 29 to 49 (LVLA…LGWI), 62 to 82 (AITG…SKNP), and 89 to 109 (KEIF…YFGY).

The protein resides in the cell membrane. This is an uncharacterized protein from Methanocaldococcus jannaschii (strain ATCC 43067 / DSM 2661 / JAL-1 / JCM 10045 / NBRC 100440) (Methanococcus jannaschii).